A 386-amino-acid chain; its full sequence is L-lactate dehydrogenase (386 aa).

The region spanning 1–380 is the FMN hydroxy acid dehydrogenase domain; it reads MIISASTDYR…TSDSLVQVTQ (380 aa). Position 24 (Y24) interacts with substrate. FMN contacts are provided by S106 and Q127. Substrate is bound at residue Y129. T155 is an FMN binding site. R164 provides a ligand contact to substrate. K251 provides a ligand contact to FMN. The Proton acceptor role is filled by H275. R278 serves as a coordination point for substrate. FMN is bound at residue 306–330; that stretch reads DSGIRSGLDVVRMIALGADGVMLGR.

Belongs to the FMN-dependent alpha-hydroxy acid dehydrogenase family. FMN serves as cofactor.

It is found in the cell inner membrane. It carries out the reaction (S)-lactate + A = pyruvate + AH2. Functionally, catalyzes the conversion of L-lactate to pyruvate. Is coupled to the respiratory chain. The sequence is that of L-lactate dehydrogenase from Pectobacterium atrosepticum (strain SCRI 1043 / ATCC BAA-672) (Erwinia carotovora subsp. atroseptica).